The primary structure comprises 462 residues: Argininosuccinate lyase (462 aa).

It belongs to the lyase 1 family. Argininosuccinate lyase subfamily.

It localises to the cytoplasm. The catalysed reaction is 2-(N(omega)-L-arginino)succinate = fumarate + L-arginine. The protein operates within amino-acid biosynthesis; L-arginine biosynthesis; L-arginine from L-ornithine and carbamoyl phosphate: step 3/3. The polypeptide is Argininosuccinate lyase (Bacillus thuringiensis (strain Al Hakam)).